A 508-amino-acid polypeptide reads, in one-letter code: Phytepsin (508 aa).

The N-terminal stretch at 1-27 is a signal peptide; sequence MGTRGLALALLAAVLLLQTVLPAASEA. Residues 28 to 66 constitute a propeptide, activation peptide; it reads EGLVRIALKKRPIDRNSRVATGLSGGEEQPLLSGANPLR. Residues 84 to 505 enclose the Peptidase A1 domain; sequence YFGEIGVGTP…DYGKLRIGFA (422 aa). The active site involves Asp-102. Intrachain disulfides connect Cys-115–Cys-121 and Cys-280–Cys-284. The active site involves Asp-289. Residues 314–419 enclose the Saposin B-type domain; it reads VVSQECKTIV…NQLCNRLPSP (106 aa). Intrachain disulfides connect Cys-319/Cys-413, Cys-344/Cys-385, Cys-350/Cys-382, and Cys-427/Cys-464. Asn-399 carries N-linked (GlcNAc...) asparagine glycosylation.

The protein belongs to the peptidase A1 family. In terms of assembly, heterodimer of two subunits (29 kDa and 11 kDa) processed from the precursor molecule. A large enzyme (32 kDa and 16 kDa) is an intermediate precursor form. As to expression, embryo and leaf.

It localises to the vacuole. It carries out the reaction Prefers hydrophobic residues Phe, Val, Ile, Leu, and Ala at P1 and P1', but also cleaves -Phe-|-Asp- and -Asp-|-Asp- bonds in 2S albumin from plant seeds.. Involved in the breakdown of propeptides of storage proteins in protein-storage vacuoles. The protein is Phytepsin of Hordeum vulgare (Barley).